Reading from the N-terminus, the 338-residue chain is Diacylglycerol acyltransferase/mycolyltransferase Ag85A (338 aa).

The first 42 residues, 1–42 (MQLVDRVRGAVTGMSRRLVVGAVGAALVSGLVGAVGGTATAG), serve as a signal peptide directing secretion. 85 to 86 (LR) contacts substrate. Positions 101 to 111 (FEWYDQSGLSV) are fibronectin-binding. Cys130 and Cys135 are disulfide-bonded. Residues Ser169 and Asp197 each coordinate substrate. Catalysis depends on Ser169, which acts as the Nucleophile. Glu273 is an active-site residue. Residues 275–278 (FVRT), Lys282, and 305–307 (HSW) contribute to the substrate site. The active site involves His305.

Belongs to the mycobacterial A85 antigen family. As to quaternary structure, homodimer.

Its subcellular location is the secreted. It is found in the cell wall. It localises to the cytoplasm. It catalyses the reaction an acyl-CoA + a 1,2-diacyl-sn-glycerol = a triacyl-sn-glycerol + CoA. The enzyme catalyses 2 alpha,alpha'-trehalose 6-mycolate = alpha,alpha'-trehalose 6,6'-bismycolate + alpha,alpha-trehalose. In terms of biological role, the antigen 85 proteins (FbpA, FbpB, FbpC) are responsible for the high affinity of mycobacteria for fibronectin, a large adhesive glycoprotein, which facilitates the attachment of M.tuberculosis to murine alveolar macrophages (AMs). They also help to maintain the integrity of the cell wall by catalyzing the transfer of mycolic acids to cell wall arabinogalactan, and through the synthesis of alpha,alpha-trehalose dimycolate (TDM, cord factor). They catalyze the transfer of a mycoloyl residue from one molecule of alpha,alpha-trehalose monomycolate (TMM) to another TMM, leading to the formation of TDM. FbpA mediates triacylglycerol (TAG) formation with long-chain acyl-CoA as the acyl donor and 1,2-dipalmitoyl-sn-glycerol (1,2-dipalmitin) as the acyl acceptor. It has a preference for C26:0-CoA over C18:1-CoA. In Mycobacterium bovis (strain ATCC BAA-935 / AF2122/97), this protein is Diacylglycerol acyltransferase/mycolyltransferase Ag85A (fbpA).